A 188-amino-acid polypeptide reads, in one-letter code: UPF0398 protein BBR47_29830 (188 aa).

It belongs to the UPF0398 family.

The polypeptide is UPF0398 protein BBR47_29830 (Brevibacillus brevis (strain 47 / JCM 6285 / NBRC 100599)).